The primary structure comprises 769 residues: Trehalose 6-phosphate phosphorylase (769 aa).

342–343 is a binding site for substrate; it reads WD. Residue Glu480 is the Proton donor of the active site. Substrate is bound at residue 589–590; sequence KQ.

The protein belongs to the glycosyl hydrolase 65 family. Monomer.

It catalyses the reaction alpha,alpha-trehalose 6-phosphate + phosphate = beta-D-glucose 1-phosphate + D-glucose 6-phosphate. Catalyzes the conversion of trehalose 6-phosphate into glucose 1-phosphate and glucose 6-phosphate. This is Trehalose 6-phosphate phosphorylase (trePP) from Lactococcus lactis subsp. lactis (strain IL1403) (Streptococcus lactis).